A 389-amino-acid chain; its full sequence is Heat-inducible transcription repressor HrcA (389 aa).

Belongs to the HrcA family.

Functionally, negative regulator of class I heat shock genes (grpE-dnaK-dnaJ and groELS operons). Prevents heat-shock induction of these operons. This Synechococcus sp. (strain JA-2-3B'a(2-13)) (Cyanobacteria bacterium Yellowstone B-Prime) protein is Heat-inducible transcription repressor HrcA.